The chain runs to 275 residues: Bis(5'-nucleosyl)-tetraphosphatase, symmetrical (275 aa).

The protein belongs to the Ap4A hydrolase family.

It catalyses the reaction P(1),P(4)-bis(5'-adenosyl) tetraphosphate + H2O = 2 ADP + 2 H(+). Functionally, hydrolyzes diadenosine 5',5'''-P1,P4-tetraphosphate to yield ADP. In Pasteurella multocida (strain Pm70), this protein is Bis(5'-nucleosyl)-tetraphosphatase, symmetrical (apaH).